Here is a 211-residue protein sequence, read N- to C-terminus: Transcriptional regulatory protein RcsA (211 aa).

The HTH luxR-type domain occupies 135–200 (LDVHPLTLSQ…VIYHVVRLTD (66 aa)). Residues 159–178 (TIQISDKMQIKAKTVSSHKG) constitute a DNA-binding region (H-T-H motif).

It belongs to the RcsA family.

Its function is as follows. Component of the Rcs signaling system, which controls transcription of numerous genes. Binds to DNA to regulate expression of genes. The polypeptide is Transcriptional regulatory protein RcsA (Pantoea stewartii subsp. stewartii (Erwinia stewartii)).